The sequence spans 375 residues: Growth/differentiation factor 8 (375 aa).

A signal peptide spans 1–23 (MQKLAVYVYIYLFMLISVDPVAL). Residues 24–266 (DDGSQPTENA…VTDTPKRSRR (243 aa)) constitute a propeptide that is removed on maturation. N-linked (GlcNAc...) asparagine glycosylation is present at asparagine 71. 4 cysteine pairs are disulfide-bonded: cysteine 272–cysteine 282, cysteine 281–cysteine 340, cysteine 309–cysteine 372, and cysteine 313–cysteine 374.

Belongs to the TGF-beta family. Homodimer; disulfide-linked.

Its subcellular location is the secreted. In terms of biological role, acts specifically as a negative regulator of skeletal muscle growth. The protein is Growth/differentiation factor 8 (MSTN) of Anser anser anser (Western greylag goose).